The sequence spans 405 residues: Cysteine desulfurase IscS (405 aa).

N156 contributes to the pyridoxal 5'-phosphate binding site. An N6-(pyridoxal phosphate)lysine modification is found at K207. Residue C329 is the Cysteine persulfide intermediate of the active site. C329 provides a ligand contact to [2Fe-2S] cluster.

The protein belongs to the class-V pyridoxal-phosphate-dependent aminotransferase family. NifS/IscS subfamily. Homodimer. Forms a heterotetramer with IscU, interacts with other sulfur acceptors. It depends on pyridoxal 5'-phosphate as a cofactor.

The protein localises to the cytoplasm. It catalyses the reaction (sulfur carrier)-H + L-cysteine = (sulfur carrier)-SH + L-alanine. It functions in the pathway cofactor biosynthesis; iron-sulfur cluster biosynthesis. Master enzyme that delivers sulfur to a number of partners involved in Fe-S cluster assembly, tRNA modification or cofactor biosynthesis. Catalyzes the removal of elemental sulfur atoms from cysteine to produce alanine. Functions as a sulfur delivery protein for Fe-S cluster synthesis onto IscU, an Fe-S scaffold assembly protein, as well as other S acceptor proteins. This Dechloromonas aromatica (strain RCB) protein is Cysteine desulfurase IscS.